A 93-amino-acid polypeptide reads, in one-letter code: Large ribosomal subunit protein eL42 (93 aa).

4 residues coordinate Zn(2+): C11, C14, C72, and C75. The C4-type zinc finger occupies 11-75; that stretch reads CPHCHSHFEH…TDLKYRCSEC (65 aa).

This sequence belongs to the eukaryotic ribosomal protein eL42 family. In terms of assembly, part of the 50S ribosomal subunit. Zn(2+) is required as a cofactor.

In terms of biological role, binds to the 23S rRNA. The protein is Large ribosomal subunit protein eL42 (rpl44e) of Natronomonas pharaonis (strain ATCC 35678 / DSM 2160 / CIP 103997 / JCM 8858 / NBRC 14720 / NCIMB 2260 / Gabara) (Halobacterium pharaonis).